A 612-amino-acid polypeptide reads, in one-letter code: MPDYRSKTSTHGRNMAGARALWRATGMKDEDFKKPIIAIANSFTQFVPGHVHLKDMGQLVAREIEKHGGVAKEFNTIAVDDGIAMGHDGMLYSLPSREIIADSVEYMVNAHCADAIVCISNCDKITPGMLMAALRLNIPVVFVSGGPMEAGKTKLANHGLDLVDAMVVAADDSCSDEKVAEYERSACPTCGSCSGMFTANSMNCLTEALGLSLPGNGTTLATHADREQLFLRAGRIAVELCKRYYQDGDESVLPRNVASRKAFENAMTLDIAMGGSTNTILHLLAAAQEAEVDFDLRDIDALSRKVPQLCKVAPNIQKYHMEDVHRAGGIFSILGELARGGLLHTDASTVHSPSMADAIAEWDITQTQDEAVHTFFKAGPAGIPTQVAFSQATRWPSLDLDRAEGCIRSVEHAYSQEGGLAVLYGNIALDGCVVKTAGVDESIHVFEGTAKIFESQDSAVKGILNDEVKAGDIVIIRYEGPKGGPGMQEMLYPTSYLKSKGLGKECALLTDGRFSGGTSGLSIGHASPEAAAGGAIGLVQDGDKVLIDIPNRSIQLQVSDEELAHRRIEQDKKGWKPAQPRARKVSTALKAYALLATSADKGAVRDKAMLDG.

D81 is a Mg(2+) binding site. C122 is a binding site for [2Fe-2S] cluster. The Mg(2+) site is built by D123 and K124. K124 carries the N6-carboxylysine modification. C193 is a binding site for [2Fe-2S] cluster. Residue E489 participates in Mg(2+) binding. The Proton acceptor role is filled by S515.

This sequence belongs to the IlvD/Edd family. In terms of assembly, homodimer. Requires [2Fe-2S] cluster as cofactor. Mg(2+) serves as cofactor.

It catalyses the reaction (2R)-2,3-dihydroxy-3-methylbutanoate = 3-methyl-2-oxobutanoate + H2O. The catalysed reaction is (2R,3R)-2,3-dihydroxy-3-methylpentanoate = (S)-3-methyl-2-oxopentanoate + H2O. It functions in the pathway amino-acid biosynthesis; L-isoleucine biosynthesis; L-isoleucine from 2-oxobutanoate: step 3/4. It participates in amino-acid biosynthesis; L-valine biosynthesis; L-valine from pyruvate: step 3/4. In terms of biological role, functions in the biosynthesis of branched-chain amino acids. Catalyzes the dehydration of (2R,3R)-2,3-dihydroxy-3-methylpentanoate (2,3-dihydroxy-3-methylvalerate) into 2-oxo-3-methylpentanoate (2-oxo-3-methylvalerate) and of (2R)-2,3-dihydroxy-3-methylbutanoate (2,3-dihydroxyisovalerate) into 2-oxo-3-methylbutanoate (2-oxoisovalerate), the penultimate precursor to L-isoleucine and L-valine, respectively. This chain is Dihydroxy-acid dehydratase, found in Stutzerimonas stutzeri (strain A1501) (Pseudomonas stutzeri).